Reading from the N-terminus, the 295-residue chain is Small ribosomal subunit protein uS2 (295 aa).

The tract at residues 261–295 (QAKKFSKTKNIDEETNTEFEQVLNDADENKNSDNA) is disordered.

It belongs to the universal ribosomal protein uS2 family.

This is Small ribosomal subunit protein uS2 from Rickettsia rickettsii (strain Sheila Smith).